The primary structure comprises 247 residues: ATP synthase subunit a, chloroplastic (247 aa).

5 consecutive transmembrane segments (helical) span residues 38–58 (QVLI…TLAV), 95–115 (VPFI…GALL), 134–154 (INTT…AGLS), 199–219 (LVVV…VMFL), and 220–240 (GLFT…AYIG).

The protein belongs to the ATPase A chain family. As to quaternary structure, F-type ATPases have 2 components, CF(1) - the catalytic core - and CF(0) - the membrane proton channel. CF(1) has five subunits: alpha(3), beta(3), gamma(1), delta(1), epsilon(1). CF(0) has four main subunits: a, b, b' and c.

The protein localises to the plastid. Its subcellular location is the chloroplast thylakoid membrane. Functionally, key component of the proton channel; it plays a direct role in the translocation of protons across the membrane. The sequence is that of ATP synthase subunit a, chloroplastic from Lactuca sativa (Garden lettuce).